The chain runs to 534 residues: BEN domain-containing protein 4 (534 aa).

Disordered regions lie at residues 1–24 (MEEE…RSPY), 48–128 (ELPH…AASS), and 287–322 (VHTL…EEGY). Residues 53–63 (RAPPPPPPPFA) are compositionally biased toward pro residues. The segment covering 69–83 (SISSSEPPPQQFQAQ) has biased composition (polar residues). A compositionally biased stretch (low complexity) spans 91–109 (GRAAAAASSSSPSCTPATS). Positions 295–310 (SPATSESHGHPSSSTL) are enriched in polar residues. Acidic residues predominate over residues 311–321 (PEEEEEEDEEG). The stretch at 324 to 351 (PRCQELEQEVISLQQENEELRRKLESIP) forms a coiled coil. One can recognise a BEN domain in the interval 390 to 498 (NYPVYITSKQ…DAVGHARQGR (109 aa)).

This chain is BEN domain-containing protein 4 (BEND4), found in Homo sapiens (Human).